Reading from the N-terminus, the 47-residue chain is Photosystem II reaction center protein K (47 aa).

Residues Met1–Ala10 constitute a propeptide that is removed on maturation. Residues Leu22–Ala42 traverse the membrane as a helical segment.

It belongs to the PsbK family. As to quaternary structure, PSII is composed of 1 copy each of membrane proteins PsbA, PsbB, PsbC, PsbD, PsbE, PsbF, PsbH, PsbI, PsbJ, PsbK, PsbL, PsbM, PsbT, PsbX, PsbY, PsbZ, Psb30/Ycf12, at least 3 peripheral proteins of the oxygen-evolving complex and a large number of cofactors. It forms dimeric complexes.

The protein localises to the plastid. Its subcellular location is the chloroplast thylakoid membrane. Its function is as follows. One of the components of the core complex of photosystem II (PSII). PSII is a light-driven water:plastoquinone oxidoreductase that uses light energy to abstract electrons from H(2)O, generating O(2) and a proton gradient subsequently used for ATP formation. It consists of a core antenna complex that captures photons, and an electron transfer chain that converts photonic excitation into a charge separation. This Mesostigma viride (Green alga) protein is Photosystem II reaction center protein K.